Consider the following 335-residue polypeptide: DNA-directed RNA polymerase subunit alpha (335 aa).

Positions 1-233 (MTRTANEFLT…QQIAIFVDLQ (233 aa)) are alpha N-terminal domain (alpha-NTD). Positions 247 to 335 (VDPILLRPVD…MDDRFAYRSR (89 aa)) are alpha C-terminal domain (alpha-CTD).

This sequence belongs to the RNA polymerase alpha chain family. In terms of assembly, homodimer. The RNAP catalytic core consists of 2 alpha, 1 beta, 1 beta' and 1 omega subunit. When a sigma factor is associated with the core the holoenzyme is formed, which can initiate transcription.

It carries out the reaction RNA(n) + a ribonucleoside 5'-triphosphate = RNA(n+1) + diphosphate. In terms of biological role, DNA-dependent RNA polymerase catalyzes the transcription of DNA into RNA using the four ribonucleoside triphosphates as substrates. The polypeptide is DNA-directed RNA polymerase subunit alpha (Acinetobacter baumannii (strain AB307-0294)).